The chain runs to 1066 residues: Carbamoyl phosphate synthase large chain (1066 aa).

Positions 1-401 (MPKNNNIKKV…ALMKAVRSLE (401 aa)) are carboxyphosphate synthetic domain. ATP contacts are provided by Arg-129, Arg-169, Gly-175, Gly-176, Arg-208, Ile-210, Glu-215, Gly-241, Val-242, His-243, Gln-284, and Glu-298. An ATP-grasp 1 domain is found at 133–327 (KNTMEKIGEP…IAKVAAKIAL (195 aa)). The Mg(2+) site is built by Gln-284, Glu-298, and Asn-300. Gln-284, Glu-298, and Asn-300 together coordinate Mn(2+). Residues 402 to 547 (QNIYSMNYGD…YSCFDSENEV (146 aa)) are oligomerization domain. The tract at residues 548-931 (DATKTKKKVL…ALYKAFLGAG (384 aa)) is carbamoyl phosphate synthetic domain. The ATP-grasp 2 domain maps to 673 to 863 (DEILEKCCIP…IVSLASKAVL (191 aa)). Arg-709, Lys-748, Leu-750, Glu-754, Gly-779, Ile-780, His-781, Ser-782, Gln-822, and Glu-834 together coordinate ATP. The Mg(2+) site is built by Gln-822, Glu-834, and Asn-836. Mn(2+) contacts are provided by Gln-822, Glu-834, and Asn-836. An MGS-like domain is found at 932–1066 (INLPKHKKMI…ELSLIDIARI (135 aa)). Residues 932 to 1066 (INLPKHKKMI…ELSLIDIARI (135 aa)) are allosteric domain.

This sequence belongs to the CarB family. In terms of assembly, composed of two chains; the small (or glutamine) chain promotes the hydrolysis of glutamine to ammonia, which is used by the large (or ammonia) chain to synthesize carbamoyl phosphate. Tetramer of heterodimers (alpha,beta)4. The cofactor is Mg(2+). Mn(2+) serves as cofactor.

The enzyme catalyses hydrogencarbonate + L-glutamine + 2 ATP + H2O = carbamoyl phosphate + L-glutamate + 2 ADP + phosphate + 2 H(+). It catalyses the reaction hydrogencarbonate + NH4(+) + 2 ATP = carbamoyl phosphate + 2 ADP + phosphate + 2 H(+). It functions in the pathway amino-acid biosynthesis; L-arginine biosynthesis; carbamoyl phosphate from bicarbonate: step 1/1. The protein operates within pyrimidine metabolism; UMP biosynthesis via de novo pathway; (S)-dihydroorotate from bicarbonate: step 1/3. In terms of biological role, large subunit of the glutamine-dependent carbamoyl phosphate synthetase (CPSase). CPSase catalyzes the formation of carbamoyl phosphate from the ammonia moiety of glutamine, carbonate, and phosphate donated by ATP, constituting the first step of 2 biosynthetic pathways, one leading to arginine and/or urea and the other to pyrimidine nucleotides. The large subunit (synthetase) binds the substrates ammonia (free or transferred from glutamine from the small subunit), hydrogencarbonate and ATP and carries out an ATP-coupled ligase reaction, activating hydrogencarbonate by forming carboxy phosphate which reacts with ammonia to form carbamoyl phosphate. The protein is Carbamoyl phosphate synthase large chain of Lachnoclostridium phytofermentans (strain ATCC 700394 / DSM 18823 / ISDg) (Clostridium phytofermentans).